A 57-amino-acid chain; its full sequence is Large ribosomal subunit protein bL33 (57 aa).

Belongs to the bacterial ribosomal protein bL33 family.

This is Large ribosomal subunit protein bL33 from Akkermansia muciniphila (strain ATCC BAA-835 / DSM 22959 / JCM 33894 / BCRC 81048 / CCUG 64013 / CIP 107961 / Muc).